Reading from the N-terminus, the 138-residue chain is Lymphocyte antigen 6L (138 aa).

A signal peptide spans 1–16; the sequence is MERLVLTLCTLPLAVA. N27 carries N-linked (GlcNAc...) asparagine glycosylation. The 95-residue stretch at 28–122 folds into the UPAR/Ly6 domain; it reads LSCYQCFKVS…TPQEGRWALR (95 aa). Intrachain disulfides connect C30–C47 and C103–C108. G117 carries the GPI-anchor amidated glycine lipid modification. Positions 118–138 are cleaved as a propeptide — removed in mature form; it reads RWALRGGLLLQVGLSLLRALL.

It is found in the cell membrane. The chain is Lymphocyte antigen 6L from Homo sapiens (Human).